Reading from the N-terminus, the 241-residue chain is 1-(5-phosphoribosyl)-5-[(5-phosphoribosylamino)methylideneamino] imidazole-4-carboxamide isomerase (241 aa).

Residue Asp10 is the Proton acceptor of the active site. The Proton donor role is filled by Asp131.

Belongs to the HisA/HisF family.

It localises to the cytoplasm. It catalyses the reaction 1-(5-phospho-beta-D-ribosyl)-5-[(5-phospho-beta-D-ribosylamino)methylideneamino]imidazole-4-carboxamide = 5-[(5-phospho-1-deoxy-D-ribulos-1-ylimino)methylamino]-1-(5-phospho-beta-D-ribosyl)imidazole-4-carboxamide. Its pathway is amino-acid biosynthesis; L-histidine biosynthesis; L-histidine from 5-phospho-alpha-D-ribose 1-diphosphate: step 4/9. The chain is 1-(5-phosphoribosyl)-5-[(5-phosphoribosylamino)methylideneamino] imidazole-4-carboxamide isomerase from Bifidobacterium longum (strain DJO10A).